A 32-amino-acid chain; its full sequence is Calcitonin (32 aa).

C1 and C7 are joined by a disulfide. P32 is subject to Proline amide.

The protein belongs to the calcitonin family.

Its subcellular location is the secreted. Its function is as follows. Causes a rapid but short-lived drop in the level of calcium and phosphate in blood by promoting the incorporation of those ions in the bones. The polypeptide is Calcitonin (Aquarana catesbeiana (American bullfrog)).